The following is a 355-amino-acid chain: Na(+)/H(+) exchange regulatory cofactor NHE-RF1 (355 aa).

S2 is subject to N-acetylserine. Phosphoserine occurs at positions 2 and 46. The PDZ 1 domain occupies 14–94; that stretch reads LCCLEKGPNG…AVRLLVVDPE (81 aa). 2 stretches are compositionally biased toward basic and acidic residues: residues 110 to 119 and 127 to 146; these read LLRPQEKSEQ and DTHE…RELR. Positions 110–146 are disordered; the sequence is LLRPQEKSEQAEPPAAADTHEAGDQNEAEKSHLRELR. In terms of domain architecture, PDZ 2 spans 149-229; that stretch reads LCTMKKGPNG…EAKLLVVDKE (81 aa). The disordered stretch occupies residues 244–355; that stretch reads EHLDGPLPEP…SKKNELFSNL (112 aa). Basic and acidic residues predominate over residues 259 to 268; it reads IQKESSREAL. Phosphoserine occurs at positions 264, 275, 285, and 286. Over residues 270–286 the composition is skewed to low complexity; that stretch reads EPASESPRPALARSASS. T288 bears the Phosphothreonine mark. S289, S294, and S297 each carry phosphoserine. A compositionally biased stretch (low complexity) spans 303-323; it reads STEPSSTSSSSSDPILDLNIS. Positions 345-355 are enriched in basic and acidic residues; that stretch reads WSKKNELFSNL.

In terms of assembly, homodimer, and heterodimer with NHERF2. Binds the N-termini of EZR, RDX and MSN. Binds the C-termini of PDGFRA, PDGFRB, ADRB2 and NOS2. Binds ARHGAP17, EPI64, RACK1, OPRK1, GNAQ, CTNNB1, PLCB3 and CLCN3. Forms a complex with CFTR and SLC4A7. Forms a complex with SLC4A7 and ATP6V1B1. Binds PDZK1. Binds the C-terminus of PAG1. In resting T-cells, part of a PAG1-NHERF1-MSN complex which is disrupted upon TCR activation. Directly interacts with HTR4. Interacts with MCC. Interacts with TRPC4 (via the PDZ-binding domain). Interacts (via the PDZ 1 domain) with PODXL (via the C-terminal PDZ-binding motif DTHL); interaction is not detected in glomerular epithelium cells. Interacts (via the PDZ 1 domain) with PODXL (via the C-terminal PDZ-binding motif DTHL); the interaction take place early in the secretory pathway and is necessary for its apical membrane sorting. Interacts with SLC34A1. Interacts with CFTR, SLC26A3 and SLC26A6. Interacts (via PDZ domains) with ACE2 (via PDZ-binding motif); the interaction may enhance ACE2 membrane residence. In terms of tissue distribution, expressed in spermatogenic cells.

It is found in the cytoplasm. The protein resides in the apical cell membrane. It localises to the cell projection. The protein localises to the filopodium. Its subcellular location is the ruffle. It is found in the microvillus. The protein resides in the endomembrane system. Scaffold protein that connects plasma membrane proteins with members of the ezrin/moesin/radixin family and thereby helps to link them to the actin cytoskeleton and to regulate their surface expression. Necessary for recycling of internalized ADRB2. Was first known to play a role in the regulation of the activity and subcellular location of SLC9A3. Necessary for cAMP-mediated phosphorylation and inhibition of SLC9A3. May enhance Wnt signaling. May participate in HTR4 targeting to microvilli. Involved in the regulation of phosphate reabsorption in the renal proximal tubules. Involved in sperm capacitation. May participate in the regulation of the chloride and bicarbonate homeostasis in spermatozoa. In Mus musculus (Mouse), this protein is Na(+)/H(+) exchange regulatory cofactor NHE-RF1 (Nherf1).